We begin with the raw amino-acid sequence, 372 residues long: Beta-1,4-galactosyltransferase 2 (372 aa).

Residues 1 to 15 are Cytoplasmic-facing; the sequence is MSRLLGGTLERVCKA. The chain crosses the membrane as a helical; Signal-anchor for type II membrane protein span at residues 16 to 36; it reads VLLLCLLHFLVAVILYFDVYA. At 37-372 the chain is on the lumenal side; sequence QHLAFFSRFS…GRPPSWPPRG (336 aa). The segment at 56 to 97 is disordered; sequence PAASSSSSSSNCSRPNATASSSGLPEVPSALPGPTAPTLPPC. N-linked (GlcNAc...) asparagine glycans are attached at residues Asn66 and Asn71. The segment covering 66–78 has biased composition (polar residues); the sequence is NCSRPNATASSSG. An intrachain disulfide couples Cys97 to Cys139. UDP-alpha-D-galactose contacts are provided by residues 150 to 154, 189 to 191, 217 to 218, and Trp278; these read PFRHR, FNR, and VD. Cysteines 211 and 230 form a disulfide. Mn(2+) is bound at residue Asp218. 280-283 contributes to the N-acetyl-D-glucosamine binding site; sequence GEDD. His311 is a binding site for Mn(2+). 311–313 contributes to the UDP-alpha-D-galactose binding site; sequence HDR. Residue Arg323 participates in N-acetyl-D-glucosamine binding. The N-linked (GlcNAc...) asparagine glycan is linked to Asn357.

The protein belongs to the glycosyltransferase 7 family. The cofactor is Mn(2+). Weakly expressed in various tissues. Highest expression in prostate, testis, ovary, intestine, muscle, and in fetal brain.

The protein resides in the golgi apparatus. It localises to the golgi stack membrane. The catalysed reaction is D-glucose + UDP-alpha-D-galactose = lactose + UDP + H(+). The enzyme catalyses an N-acetyl-beta-D-glucosaminyl derivative + UDP-alpha-D-galactose = a beta-D-galactosyl-(1-&gt;4)-N-acetyl-beta-D-glucosaminyl derivative + UDP + H(+). It carries out the reaction N-acetyl-D-glucosamine + UDP-alpha-D-galactose = beta-D-galactosyl-(1-&gt;4)-N-acetyl-D-glucosamine + UDP + H(+). The protein operates within protein modification; protein glycosylation. Responsible for the synthesis of complex-type N-linked oligosaccharides in many glycoproteins as well as the carbohydrate moieties of glycolipids. Can produce lactose. The protein is Beta-1,4-galactosyltransferase 2 of Homo sapiens (Human).